Consider the following 207-residue polypeptide: Ras-related protein Rab7 (207 aa).

Residues 15–22 (GDSGVGKT), 63–67 (DTAGQ), and 125–128 (NKID) each bind GTP. Residues Cys-205 and Cys-207 are each lipidated (S-geranylgeranyl cysteine). Cys-207 bears the Cysteine methyl ester mark.

The protein belongs to the small GTPase superfamily. Rab family.

It is found in the cell membrane. Protein transport. Probably involved in vesicular traffic. In Prunus armeniaca (Apricot), this protein is Ras-related protein Rab7.